The sequence spans 228 residues: tRNA (carboxymethyluridine(34)-5-O)-methyltransferase (228 aa).

The protein localises to the cytoplasm. It localises to the nucleus. It carries out the reaction 5-(carboxymethyl)uridine(34) in tRNA + S-adenosyl-L-methionine = 5-(2-methoxy-2-oxoethyl)uridine(34) in tRNA + S-adenosyl-L-homocysteine. Required for the methylation of the wobble bases at position 34 in tRNA. Appears to have a role in stress-response. The sequence is that of tRNA (carboxymethyluridine(34)-5-O)-methyltransferase (trm9) from Schizosaccharomyces pombe (strain 972 / ATCC 24843) (Fission yeast).